A 139-amino-acid chain; its full sequence is Large ribosomal subunit protein bL17 (139 aa).

Residues 120–139 (EDAKGRDSGPTQDNSEAEAA) form a disordered region.

Part of the 50S ribosomal subunit. Contacts protein L32. Post-translationally, may be methylated thrice, on undetermined residues.

This Rhodopseudomonas palustris (strain ATCC BAA-98 / CGA009) protein is Large ribosomal subunit protein bL17.